The chain runs to 315 residues: MSESLRIIFAGTPDFAARHLDALLSSGHNVVGVFTQPDRPAGRGKKLMPSPIKVLAEEEGLPVFQPVSLRPQENQQLVADLQADVMVVVAYGLILPKAVLEMPRLGCINIHGSLLPRWRGAAPIQRSLWAGDAETGVTIMQMDVGLDTGDMLYKLSCPITAEDTSGTLYDKLAELGPQGLITTLKQLADGTAKPEVQDETLVTYAEKLSKEEARIDWSLSAAQLERCIRAFNPWPMSWLEIEGQPVKVWKASVIDTATNAAPGTILEANKQGIQVATGDGILNLLSLQPAGKKAMSAQDLLNSRREWFVPGNRLV.

113–116 (SLLP) is a binding site for (6S)-5,6,7,8-tetrahydrofolate.

This sequence belongs to the Fmt family.

The catalysed reaction is L-methionyl-tRNA(fMet) + (6R)-10-formyltetrahydrofolate = N-formyl-L-methionyl-tRNA(fMet) + (6S)-5,6,7,8-tetrahydrofolate + H(+). In terms of biological role, attaches a formyl group to the free amino group of methionyl-tRNA(fMet). The formyl group appears to play a dual role in the initiator identity of N-formylmethionyl-tRNA by promoting its recognition by IF2 and preventing the misappropriation of this tRNA by the elongation apparatus. The sequence is that of Methionyl-tRNA formyltransferase from Shigella flexneri serotype 5b (strain 8401).